The following is a 78-amino-acid chain: Conotoxin TsMSGL-13 (78 aa).

An N-terminal signal peptide occupies residues 1-24 (MSGLGIMVLTLLLFMFMATSHQDA). The propeptide occupies 25–44 (GEKQATQRDAINVRRRRSIT). Disulfide bonds link Cys-51/Cys-63, Cys-55/Cys-72, and Cys-62/Cys-76. Phe-77 carries the post-translational modification Phenylalanine amide.

Belongs to the conotoxin O3 superfamily. In terms of tissue distribution, expressed by the venom duct.

It is found in the secreted. In Conus tessulatus (Tessellate cone), this protein is Conotoxin TsMSGL-13.